A 130-amino-acid polypeptide reads, in one-letter code: Small ribosomal subunit protein uS9 (130 aa).

The segment at 98 to 130 is disordered; it reads LKRAGLLTRDPRMKERKKPGLKKARRSPQFSKR. Positions 111 to 130 are enriched in basic residues; sequence KERKKPGLKKARRSPQFSKR.

The protein belongs to the universal ribosomal protein uS9 family.

The protein is Small ribosomal subunit protein uS9 (rpsI) of Staphylococcus carnosus (strain TM300).